The sequence spans 596 residues: Adenine deaminase (596 aa).

It belongs to the metallo-dependent hydrolases superfamily. Adenine deaminase family. Mn(2+) serves as cofactor.

It carries out the reaction adenine + H2O + H(+) = hypoxanthine + NH4(+). This Moorella thermoacetica (strain ATCC 39073 / JCM 9320) protein is Adenine deaminase.